We begin with the raw amino-acid sequence, 212 residues long: Uracil phosphoribosyltransferase (212 aa).

5-phospho-alpha-D-ribose 1-diphosphate contacts are provided by residues arginine 78, arginine 103, and 130 to 138 (DPMLATGGS). Uracil contacts are provided by residues isoleucine 193 and 198-200 (GDA). Aspartate 199 contacts 5-phospho-alpha-D-ribose 1-diphosphate.

Belongs to the UPRTase family. Mg(2+) is required as a cofactor.

The enzyme catalyses UMP + diphosphate = 5-phospho-alpha-D-ribose 1-diphosphate + uracil. It functions in the pathway pyrimidine metabolism; UMP biosynthesis via salvage pathway; UMP from uracil: step 1/1. With respect to regulation, allosterically activated by GTP. Functionally, catalyzes the conversion of uracil and 5-phospho-alpha-D-ribose 1-diphosphate (PRPP) to UMP and diphosphate. The sequence is that of Uracil phosphoribosyltransferase from Bordetella avium (strain 197N).